The primary structure comprises 257 residues: Acetylglutamate kinase (257 aa).

Substrate-binding positions include 43–44 (GG), Arg-65, and Asn-157. Residues 180–185 (DVSGIL) and 208–210 (IIT) contribute to the ATP site.

The protein belongs to the acetylglutamate kinase family. ArgB subfamily. As to quaternary structure, homodimer.

It is found in the cytoplasm. The enzyme catalyses N-acetyl-L-glutamate + ATP = N-acetyl-L-glutamyl 5-phosphate + ADP. The protein operates within amino-acid biosynthesis; L-arginine biosynthesis; N(2)-acetyl-L-ornithine from L-glutamate: step 2/4. Catalyzes the ATP-dependent phosphorylation of N-acetyl-L-glutamate. This chain is Acetylglutamate kinase, found in Pectobacterium carotovorum subsp. carotovorum (strain PC1).